Reading from the N-terminus, the 3132-residue chain is Enniatin synthetase (3132 aa).

The tract at residues 53–466 is condensation 1; the sequence is ADDKQRAVGH…VEKVDMMTQE (414 aa). The disordered stretch occupies residues 186–212; that stretch reads NDEHPRQFETPDSSQATPEEDLQPNPS. The segment at 495–887 is adenylation 1; it reads SQSPNKAAVA…GRMDSQVKIR (393 aa). The disordered stretch occupies residues 994-1013; the sequence is SQKTHSTPSQQSQAAISSGT. A Carrier 1 domain is found at 1010 to 1086; that stretch reads SSGTDTETKL…GLKAIVIGTS (77 aa). The residue at position 1047 (S1047) is an O-(pantetheine 4'-phosphoryl)serine. The interval 1105 to 1534 is condensation 2; the sequence is SYAQNRMWFL…ETCISVLPLT (430 aa). Residues 1563–1960 form an adenylation 2 region; it reads FREQAAANPE…GRMDNQFKIR (398 aa). The interval 2021–2177 is S-adenosyl-L-methionine-dependent N-methyltransferase; sequence EGWQDHFESG…YLAEVIDGLI (157 aa). Carrier domains follow at residues 2504–2578 and 2598–2672; these read FPIS…RQGL and APRT…ESSH. O-(pantetheine 4'-phosphoryl)serine occurs at positions 2538 and 2632. Residues 2719–3124 are condensation 3; it reads QDVYPSTQMQ…RHVLEEVCKT (406 aa).

The protein belongs to the NRP synthetase family. Requires pantetheine 4'-phosphate as cofactor.

The protein operates within antibiotic biosynthesis; enniatin biosynthesis. Nonribosomal peptide synthetase that synthesizes enniatin by coupling three D-hydroxycarboxylic acids and three L-amino acids via amide and ester bonds in an alternating fashion. Whereas ESYN1 can accept different amino acids as precursors (L-valine, L-isoleucine or L-leucine), only one species of D-hydroxycarboxylic acid can be found in natural enniatin isolates (D-hydroxyisovaleric acid, D-Hiv). D-Hiv stems from L-valine deanimation by a valine aminotransferase to 2-keto-isovaleric acid (2-Kiv), which becomes subsequently reduced by a keto-isovaleric acid reductase (KivR) to D-Hiv. The polypeptide is Enniatin synthetase (Fusarium oxysporum (Fusarium vascular wilt)).